A 339-amino-acid chain; its full sequence is Phenylalanine--tRNA ligase alpha subunit (339 aa).

E250 is a binding site for Mg(2+).

This sequence belongs to the class-II aminoacyl-tRNA synthetase family. Phe-tRNA synthetase alpha subunit type 1 subfamily. In terms of assembly, tetramer of two alpha and two beta subunits. Requires Mg(2+) as cofactor.

Its subcellular location is the cytoplasm. It carries out the reaction tRNA(Phe) + L-phenylalanine + ATP = L-phenylalanyl-tRNA(Phe) + AMP + diphosphate + H(+). This Bacteroides thetaiotaomicron (strain ATCC 29148 / DSM 2079 / JCM 5827 / CCUG 10774 / NCTC 10582 / VPI-5482 / E50) protein is Phenylalanine--tRNA ligase alpha subunit.